Reading from the N-terminus, the 776-residue chain is Lysyl oxidase homolog 2 (776 aa).

The signal sequence occupies residues 1–25; the sequence is MEIPFGSCLYSCLALLVLLPSLSLA. 4 consecutive SRCR domains span residues 61-162, 191-305, 329-428, and 438-546; these read VRLA…VVCS, IRPI…VSCV, VRLR…VRCN, and VRLN…VACS. Disulfide bonds link Cys-87/Cys-151, Cys-100/Cys-161, Cys-131/Cys-141, Cys-221/Cys-294, Cys-234/Cys-304, Cys-268/Cys-278, Cys-354/Cys-417, Cys-367/Cys-427, and Cys-398/Cys-408. Asn-267 carries N-linked (GlcNAc...) asparagine glycosylation. A glycan (N-linked (GlcNAc...) asparagine) is linked at Asn-291. N-linked (GlcNAc...) asparagine glycosylation occurs at Asn-458. 3 disulfides stabilise this stretch: Cys-467–Cys-532, Cys-480–Cys-545, and Cys-514–Cys-524. The interval 550–753 is lysyl-oxidase like; it reads PDLVLNAEIV…WMYNCHVGGA (204 aa). Positions 551 and 552 each coordinate Ca(2+). Intrachain disulfides connect Cys-575–Cys-627, Cys-581–Cys-697, Cys-659–Cys-675, and Cys-665–Cys-687. Positions 628, 630, and 632 each coordinate Cu cation. Asn-646 is a glycosylation site (N-linked (GlcNAc...) asparagine). The lysine tyrosylquinone (Lys-Tyr) cross-link spans 655–691; the sequence is KASFCLEDTECEGDIQKSYECANFGEQGITMGCWDMY. 2',4',5'-topaquinone is present on Tyr-691. Glu-724, Asp-726, Asn-729, and Asn-730 together coordinate Ca(2+). Cys-734 and Cys-748 are joined by a disulfide.

This sequence belongs to the lysyl oxidase family. Component of some chromatin repressor complex. Interacts with SNAI1. Interacts with TAF10. Interacts with HSPA5. Interacts with EFEMP2. It depends on Cu cation as a cofactor. Requires lysine tyrosylquinone residue as cofactor. In terms of processing, the lysine tyrosylquinone cross-link (LTQ) is generated by condensation of the epsilon-amino group of a lysine with a topaquinone produced by oxidation of tyrosine. N-glycosylated. N-glycosylation on Asn-458 and Asn-646 may be essential for proper folding and secretion; may be composed of a fucosylated carbohydrates attached to a trimannose N-linked glycan core.

It localises to the secreted. Its subcellular location is the extracellular space. The protein localises to the extracellular matrix. The protein resides in the basement membrane. It is found in the nucleus. It localises to the chromosome. Its subcellular location is the endoplasmic reticulum. It carries out the reaction L-lysyl-[protein] + O2 + H2O = (S)-2-amino-6-oxohexanoyl-[protein] + H2O2 + NH4(+). With respect to regulation, specifically inhibited by a mouse monoclonal antibody AB0023, inhibition occurs in a non-competitive manner. In terms of biological role, mediates the post-translational oxidative deamination of lysine residues on target proteins leading to the formation of deaminated lysine (allysine). Acts as a transcription corepressor and specifically mediates deamination of trimethylated 'Lys-4' of histone H3 (H3K4me3), a specific tag for epigenetic transcriptional activation. Shows no activity against histone H3 when it is trimethylated on 'Lys-9' (H3K9me3) or 'Lys-27' (H3K27me3) or when 'Lys-4' is monomethylated (H3K4me1) or dimethylated (H3K4me2). Also mediates deamination of methylated TAF10, a member of the transcription factor IID (TFIID) complex, which induces release of TAF10 from promoters, leading to inhibition of TFIID-dependent transcription. LOXL2-mediated deamination of TAF10 results in transcriptional repression of genes required for embryonic stem cell pluripotency including POU5F1/OCT4, NANOG, KLF4 and SOX2. Involved in epithelial to mesenchymal transition (EMT) via interaction with SNAI1 and participates in repression of E-cadherin CDH1, probably by mediating deamination of histone H3. During EMT, involved with SNAI1 in negatively regulating pericentromeric heterochromatin transcription. SNAI1 recruits LOXL2 to pericentromeric regions to oxidize histone H3 and repress transcription which leads to release of heterochromatin component CBX5/HP1A, enabling chromatin reorganization and acquisition of mesenchymal traits. Interacts with the endoplasmic reticulum protein HSPA5 which activates the IRE1-XBP1 pathway of the unfolded protein response, leading to expression of several transcription factors involved in EMT and subsequent EMT induction. When secreted into the extracellular matrix, promotes cross-linking of extracellular matrix proteins by mediating oxidative deamination of peptidyl lysine residues in precursors to fibrous collagen and elastin. Acts as a regulator of sprouting angiogenesis, probably via collagen IV scaffolding. Acts as a regulator of chondrocyte differentiation, probably by regulating expression of factors that control chondrocyte differentiation. The polypeptide is Lysyl oxidase homolog 2 (Loxl2) (Rattus norvegicus (Rat)).